The chain runs to 436 residues: Proline--tRNA ligase (436 aa).

The protein belongs to the class-II aminoacyl-tRNA synthetase family. ProS type 2 subfamily. In terms of assembly, homodimer.

It localises to the cytoplasm. The enzyme catalyses tRNA(Pro) + L-proline + ATP = L-prolyl-tRNA(Pro) + AMP + diphosphate. In terms of biological role, catalyzes the attachment of proline to tRNA(Pro) in a two-step reaction: proline is first activated by ATP to form Pro-AMP and then transferred to the acceptor end of tRNA(Pro). This chain is Proline--tRNA ligase, found in Neorickettsia sennetsu (strain ATCC VR-367 / Miyayama) (Ehrlichia sennetsu).